Here is a 74-residue protein sequence, read N- to C-terminus: WAP four-disulfide core domain protein 18 (74 aa).

Residues 1–24 (MKTATVFVLVALIFMTMTTAWALS) form the signal peptide. In terms of domain architecture, WAP spans 26-73 (PKEKPGACPKPPPRSFGTCDERCTGDGSCSGNMKCCSNGCGHACKPPV).

The protein resides in the secreted. Its function is as follows. Could have proteinase inhibiting capacity. In Bos taurus (Bovine), this protein is WAP four-disulfide core domain protein 18 (WFDC18).